Reading from the N-terminus, the 282-residue chain is Bifunctional protein FolD (282 aa).

NADP(+) is bound by residues 165–167 (GRS), S190, and T231.

It belongs to the tetrahydrofolate dehydrogenase/cyclohydrolase family. In terms of assembly, homodimer.

The enzyme catalyses (6R)-5,10-methylene-5,6,7,8-tetrahydrofolate + NADP(+) = (6R)-5,10-methenyltetrahydrofolate + NADPH. The catalysed reaction is (6R)-5,10-methenyltetrahydrofolate + H2O = (6R)-10-formyltetrahydrofolate + H(+). It participates in one-carbon metabolism; tetrahydrofolate interconversion. Catalyzes the oxidation of 5,10-methylenetetrahydrofolate to 5,10-methenyltetrahydrofolate and then the hydrolysis of 5,10-methenyltetrahydrofolate to 10-formyltetrahydrofolate. This Clostridium botulinum (strain Alaska E43 / Type E3) protein is Bifunctional protein FolD.